A 204-amino-acid chain; its full sequence is Inactive ribonuclease-like protein 9 (204 aa).

A signal peptide spans 1–26 (MMRTLITTHPLLLLLLLQQLLQPVQL). Cystine bridges form between cysteine 97–cysteine 152, cysteine 115–cysteine 167, and cysteine 122–cysteine 129. Asparagine 130 and asparagine 142 each carry an N-linked (GlcNAc...) asparagine glycan.

The protein belongs to the pancreatic ribonuclease family.

The protein resides in the secreted. In terms of biological role, does not exhibit any ribonuclease activity. This is Inactive ribonuclease-like protein 9 (RNASE9) from Chlorocebus pygerythrus (Vervet monkey).